The sequence spans 506 residues: Allantoinase (506 aa).

His-105, His-107, Lys-195, His-231, His-292, and Asp-366 together coordinate Zn(2+). Lys-195 carries the N6-carboxylysine modification.

It belongs to the metallo-dependent hydrolases superfamily. Allantoinase family. In terms of assembly, homotetramer. Requires Zn(2+) as cofactor. Carboxylation allows a single lysine to coordinate two zinc ions.

The catalysed reaction is (S)-allantoin + H2O = allantoate + H(+). Its pathway is nitrogen metabolism; (S)-allantoin degradation; allantoate from (S)-allantoin: step 1/1. Catalyzes the conversion of allantoin (5-ureidohydantoin) to allantoate by hydrolytic cleavage of the five-member hydantoin ring. Catalyzes the first step of the ureide allantoin degradation followed by the sequential activity of AAH, UGLYAH and UAH which allows a complete purine breakdown without the intermediate generation of urea. This is Allantoinase (ALN) from Arabidopsis thaliana (Mouse-ear cress).